A 200-amino-acid polypeptide reads, in one-letter code: Acyl-homoserine-lactone synthase (200 aa).

Belongs to the autoinducer synthase family.

The enzyme catalyses a fatty acyl-[ACP] + S-adenosyl-L-methionine = an N-acyl-L-homoserine lactone + S-methyl-5'-thioadenosine + holo-[ACP] + H(+). Required for the synthesis of BHL (N-butanoyl-L-homoserine lactone). This chain is Acyl-homoserine-lactone synthase (swrI), found in Serratia liquefaciens.